The primary structure comprises 97 residues: Pyrin domain-containing protein 2 (97 aa).

A Pyrin domain is found at 1–94 (MASSAELDFN…SGRADEHCVM (94 aa)).

Interacts with PYCARD/ASC (via pyrin domain). Interacts with NLRP2 (via pyrin domain). In terms of tissue distribution, predominantly expressed in peripheral blood. Weakly expressed in testis.

The protein localises to the cytoplasm. It localises to the nucleus. Its function is as follows. May play a role in innate immunity by disrupting the interaction between PYCARD and NLRP3, thereby regulating the NLRP3 inflammasome. May also inhibit NF-kappa-B signaling distally by affecting the nuclear accumulation of RELA. In Homo sapiens (Human), this protein is Pyrin domain-containing protein 2.